The primary structure comprises 356 residues: Alternative oxidase, mitochondrial (356 aa).

A helical membrane pass occupies residues 152–172 (VIRFIFLETVAGVPGMVGGML). Glutamate 159, glutamate 198, and histidine 201 together coordinate Fe cation. The chain crosses the membrane as a helical span at residues 217 to 237 (LMVLGAQGVFFNGFFISYLIS). Fe cation is bound by residues glutamate 249, glutamate 304, and histidine 307. Residues 330–356 (YDNPEAPHPTKSAEIVKPTGWERDEVI) are disordered.

Belongs to the alternative oxidase family. Fe cation serves as cofactor.

It is found in the mitochondrion inner membrane. Catalyzes cyanide-resistant oxygen consumption. May increase respiration when the cytochrome respiratory pathway is restricted, or in response to low temperatures. The protein is Alternative oxidase, mitochondrial (AOX1) of Ajellomyces capsulatus (Darling's disease fungus).